The chain runs to 121 residues: Putative membrane protein insertion efficiency factor (121 aa).

This sequence belongs to the UPF0161 family.

The protein localises to the cell membrane. Could be involved in insertion of integral membrane proteins into the membrane. The sequence is that of Putative membrane protein insertion efficiency factor from Rhodococcus opacus (strain B4).